We begin with the raw amino-acid sequence, 427 residues long: MESLTLQPIARVDGTINLPGSKSVSNRALLLAALAHGKTVLTNLLDSDDVRHMLNALAALGVSYTLSADRTRCEIIGNGGSLHAEGALELFLGNAGTAMRPLAAALCLGSNDIVLTGEPRMKERPIGHLVDALRLGRAKITYLEQENYPPLRLQGGFTGGNVDVDGSVSSQFLTALLMTAPLAPEDTVIRIKGDLVSKPYIDITLNLMKTFGVEIENQHYQQFVVKGGQSYQSPGTYLVEGDASSASYFLAAAAIKGGTVKVTGIGRNSMQGDIRFADVLEKMGATICWGDDYISCTRGELNAIDMDMNHIPDAAMTIATAALFAKGTTTLRNIYNWRVKETDRLFAMATELRKVGAEVEEGHDYIRITPPEKLNFAEIATYNDHRMAMCFSLVALSDTPVTILDPKCTAKTFPDYFEQLARISQAA.

The 3-phosphoshikimate site is built by Lys-22, Ser-23, and Arg-27. Lys-22 contributes to the phosphoenolpyruvate binding site. Phosphoenolpyruvate contacts are provided by Gly-96 and Arg-124. Residues Ser-169, Ser-170, Gln-171, Ser-197, Asp-313, Asn-336, and Lys-340 each contribute to the 3-phosphoshikimate site. Position 171 (Gln-171) interacts with phosphoenolpyruvate. The active-site Proton acceptor is the Asp-313. Arg-344, Arg-386, and Lys-411 together coordinate phosphoenolpyruvate.

Belongs to the EPSP synthase family. As to quaternary structure, monomer.

Its subcellular location is the cytoplasm. The enzyme catalyses 3-phosphoshikimate + phosphoenolpyruvate = 5-O-(1-carboxyvinyl)-3-phosphoshikimate + phosphate. It participates in metabolic intermediate biosynthesis; chorismate biosynthesis; chorismate from D-erythrose 4-phosphate and phosphoenolpyruvate: step 6/7. Functionally, catalyzes the transfer of the enolpyruvyl moiety of phosphoenolpyruvate (PEP) to the 5-hydroxyl of shikimate-3-phosphate (S3P) to produce enolpyruvyl shikimate-3-phosphate and inorganic phosphate. The polypeptide is 3-phosphoshikimate 1-carboxyvinyltransferase (Shigella dysenteriae).